The sequence spans 207 residues: Large ribosomal subunit protein bL9 (207 aa).

A compositionally biased stretch (basic and acidic residues) spans 162-176 (QKKEEKAKDEVSATE). Residues 162–207 (QKKEEKAKDEVSATEKDEELMLSSVTNDNDGDGAKEIVVEGTEESQ) are disordered.

It belongs to the bacterial ribosomal protein bL9 family.

In terms of biological role, binds to the 23S rRNA. The sequence is that of Large ribosomal subunit protein bL9 from Ehrlichia ruminantium (strain Gardel).